The chain runs to 296 residues: Ribonuclease HIII (296 aa).

Residues 81-296 (QAMIGTDEVG…TQKAKQLLER (216 aa)) form the RNase H type-2 domain. The a divalent metal cation site is built by D87, E88, and D190.

Belongs to the RNase HII family. RnhC subfamily. Mn(2+) is required as a cofactor. Requires Mg(2+) as cofactor.

The protein localises to the cytoplasm. It carries out the reaction Endonucleolytic cleavage to 5'-phosphomonoester.. Its function is as follows. Endonuclease that specifically degrades the RNA of RNA-DNA hybrids. The polypeptide is Ribonuclease HIII (Streptococcus gordonii (strain Challis / ATCC 35105 / BCRC 15272 / CH1 / DL1 / V288)).